The sequence spans 1487 residues: Probable lysine-specific demethylase SE14 (1487 aa).

A disordered region spans residues 1–23 (MPPQPPPAASASASAPDPAVPAW). Residues 9-22 (ASASASAPDPAVPA) are compositionally biased toward low complexity. The region spanning 30-71 (APEYRPTESEFADPIAFLSRVEREAAAYGICKVIPPHPRPSR) is the JmjN domain. Residues 86–104 (CDAPAPSPAAASDSSIPPS) are compositionally biased toward low complexity. The disordered stretch occupies residues 86-113 (CDAPAPSPAAASDSSIPPSSSSPPPVSA). In terms of domain architecture, JmjC spans 232–398 (NSPWNLQAIA…FAKEAAVRRA (167 aa)). Positions 275, 277, and 366 each coordinate Fe cation. Disordered stretches follow at residues 494–555 (SCSK…DDGD) and 684–718 (YGDT…PDVE). Composition is skewed to basic and acidic residues over residues 498–507 (APEKKGEDGP) and 542–551 (QAPEGEKLDT). A C2H2-type 1; degenerate zinc finger spans residues 1377-1400 (FQCDIEFCDMTFETKAELRAHQRN). C2H2-type zinc fingers lie at residues 1400–1424 (NICT…QCVH), 1430–1454 (FKCP…IRVH), and 1460–1486 (YKCS…KFNH).

Requires Fe(2+) as cofactor.

Its subcellular location is the nucleus. In terms of biological role, histone demethylase that demethylates 'Lys-4' (H3K4me) of histone H3. Involved in the control of flowering time. Has a suppressive effect on floral transition under long day conditions through the demethylation of H3K4me3 in the promoter region of the flower-promoting signal HD3B/RFT1. The protein is Probable lysine-specific demethylase SE14 (SE14) of Oryza sativa subsp. japonica (Rice).